Reading from the N-terminus, the 264-residue chain is uncharacterized protein (264 aa).

15 to 22 lines the ATP pocket; it reads KGGTGKTT.

It belongs to the ParA family. MinD subfamily.

This is an uncharacterized protein from Methanocaldococcus jannaschii (strain ATCC 43067 / DSM 2661 / JAL-1 / JCM 10045 / NBRC 100440) (Methanococcus jannaschii).